An 84-amino-acid polypeptide reads, in one-letter code: Exendin-2-long (84 aa).

An N-terminal signal peptide occupies residues 1-23; it reads MKSILWLCVFGLLIATLFPVSWQ. Positions 24–44 are excised as a propeptide; sequence MAIKSRLSSEDSETDQRLFES.

It belongs to the glucagon family. An amidated Pro-81 is described. Such an amidation is however not compatible with the sequence displayed. Indeed cDNAs do not encode a Gly that could serve as substrate for peptide alpha-amidation. Expressed by the venom gland. Not expressed in the pancreas, liver, stomach, small intestine, lung, heart, kidney, spleen, ovary, and brain.

Its subcellular location is the secreted. In terms of biological role, has vasoactive intestinal peptide(VIP)/secretin-like biological activity. Interacts with rat and human VIP receptors 1 (VIPR1) and 2 (VIPR2), with the highest affinity for the human VIPR2. Induces hypotension that is mediated by relaxation of cardiac smooth muscle. This vasodilation may not be transduced by VIP or PACAP receptors. The chain is Exendin-2-long from Heloderma suspectum (Gila monster).